Reading from the N-terminus, the 92-residue chain is Small ribosomal subunit protein bS16 (92 aa).

Belongs to the bacterial ribosomal protein bS16 family.

In Staphylococcus carnosus (strain TM300), this protein is Small ribosomal subunit protein bS16.